The following is a 322-amino-acid chain: Acetylglutamate kinase (322 aa).

Substrate-binding positions include 89 to 90 (GG), Arg-111, and Asn-217.

This sequence belongs to the acetylglutamate kinase family. ArgB subfamily.

Its subcellular location is the cytoplasm. The enzyme catalyses N-acetyl-L-glutamate + ATP = N-acetyl-L-glutamyl 5-phosphate + ADP. Its pathway is amino-acid biosynthesis; L-arginine biosynthesis; N(2)-acetyl-L-ornithine from L-glutamate: step 2/4. Functionally, catalyzes the ATP-dependent phosphorylation of N-acetyl-L-glutamate. This Ehrlichia ruminantium (strain Welgevonden) protein is Acetylglutamate kinase.